A 161-amino-acid chain; its full sequence is 6,7-dimethyl-8-ribityllumazine synthase (161 aa).

Residues Trp26, 58–60, and 81–83 contribute to the 5-amino-6-(D-ribitylamino)uracil site; these read SFE and VVI. Residue 86 to 87 participates in (2S)-2-hydroxy-3-oxobutyl phosphate binding; sequence GT. His89 serves as the catalytic Proton donor. Phe114 serves as a coordination point for 5-amino-6-(D-ribitylamino)uracil. Position 128 (Arg128) interacts with (2S)-2-hydroxy-3-oxobutyl phosphate.

It belongs to the DMRL synthase family.

It catalyses the reaction (2S)-2-hydroxy-3-oxobutyl phosphate + 5-amino-6-(D-ribitylamino)uracil = 6,7-dimethyl-8-(1-D-ribityl)lumazine + phosphate + 2 H2O + H(+). The protein operates within cofactor biosynthesis; riboflavin biosynthesis; riboflavin from 2-hydroxy-3-oxobutyl phosphate and 5-amino-6-(D-ribitylamino)uracil: step 1/2. Catalyzes the formation of 6,7-dimethyl-8-ribityllumazine by condensation of 5-amino-6-(D-ribitylamino)uracil with 3,4-dihydroxy-2-butanone 4-phosphate. This is the penultimate step in the biosynthesis of riboflavin. The protein is 6,7-dimethyl-8-ribityllumazine synthase of Streptomyces coelicolor (strain ATCC BAA-471 / A3(2) / M145).